The primary structure comprises 255 residues: MSNARQRELIREFLAVTSATSAAAETYLERNHWSLDHALDDFYTQSGGGGRAEQYSAELVATFERYAAGGAMDTEALVRYVGDLGFQLEDVATLCLARLLKVEELTADISRFQFLSTWHGLGCSSLPDMRAAVDALELRLRTDAAYFRALYAYTFGLGLDAGGRRLSVETAIAYWSLFFLDHTYAVTVPAPRLRSWFEFLRAGDHSVSRDTWDMFPRFAQRFPDDTELLEHYNELASWPLVIDEYYEWVKGRNQL.

One can recognise a UBA-like domain in the interval 6–43; the sequence is QRELIREFLAVTSATSAAAETYLERNHWSLDHALDDFY. A DCUN1 domain is found at 54-250; the sequence is QYSAELVATF…VIDEYYEWVK (197 aa).

In terms of biological role, may contribute to neddylation of cullin components of SCF-type E3 ubiquitin ligase complexes. Neddylation of cullins play an essential role in the regulation of SCF-type complexes activity. In Eremothecium gossypii (strain ATCC 10895 / CBS 109.51 / FGSC 9923 / NRRL Y-1056) (Yeast), this protein is Defective in cullin neddylation protein 1 (DCN1).